The sequence spans 130 residues: Small ribosomal subunit protein uS8 (130 aa).

It belongs to the universal ribosomal protein uS8 family. Part of the 30S ribosomal subunit. Contacts proteins S5 and S12.

Its function is as follows. One of the primary rRNA binding proteins, it binds directly to 16S rRNA central domain where it helps coordinate assembly of the platform of the 30S subunit. This is Small ribosomal subunit protein uS8 from Pseudomonas fluorescens (strain Pf0-1).